The sequence spans 387 residues: Cystathionine beta-lyase (387 aa).

Lysine 204 is subject to N6-(pyridoxal phosphate)lysine.

Belongs to the trans-sulfuration enzymes family. Homotetramer. Pyridoxal 5'-phosphate serves as cofactor.

It localises to the cytoplasm. The enzyme catalyses L,L-cystathionine + H2O = L-homocysteine + pyruvate + NH4(+). The catalysed reaction is an S-substituted L-cysteine + H2O = a thiol + pyruvate + NH4(+). The protein operates within amino-acid biosynthesis; L-methionine biosynthesis via de novo pathway; L-homocysteine from L-cystathionine: step 1/1. Functionally, catalyzes the cleavage of cystathionine to homocysteine, pyruvate and ammonia during methionine biosynthesis. The protein is Cystathionine beta-lyase (metC) of Coxiella burnetii (strain RSA 493 / Nine Mile phase I).